The primary structure comprises 510 residues: Probable gamma-aminobutyrate transaminase 3, mitochondrial (510 aa).

Residues 1 to 41 (MICRSLLLLRSNAASKASNIVKHVAATGCLPKYSSEAPARY) constitute a mitochondrion transit peptide. 166–167 (GS) contacts pyridoxal 5'-phosphate. Residue Y199 coordinates substrate. D306 lines the pyridoxal 5'-phosphate pocket. Residue K335 coordinates substrate. K335 bears the N6-(pyridoxal phosphate)lysine mark.

This sequence belongs to the class-III pyridoxal-phosphate-dependent aminotransferase family.

The protein resides in the mitochondrion. The catalysed reaction is 4-aminobutanoate + pyruvate = succinate semialdehyde + L-alanine. It carries out the reaction 4-aminobutanoate + glyoxylate = succinate semialdehyde + glycine. Its function is as follows. Transaminase that degrades gamma-amino butyric acid (GABA). The chain is Probable gamma-aminobutyrate transaminase 3, mitochondrial from Oryza sativa subsp. japonica (Rice).